The sequence spans 158 residues: C-type lectin BML-1 (158 aa).

Positions 1-23 are cleaved as a signal peptide; sequence MGHFTFTGLCLLAMFLSLRGAEC. Intrachain disulfides connect Cys26–Cys37, Cys54–Cys154, Cys61–Cys156, and Cys129–Cys146. The region spanning 33 to 155 is the C-type lectin domain; that stretch reads KNGLCYKVFS…CAALRPFLCQ (123 aa). Gln119, Asp121, and Glu127 together coordinate Ca(2+). Residues 119–121 carry the Galactose-binding motif; sequence QPD. An N-linked (GlcNAc...) asparagine glycan is attached at Asn134. Ca(2+)-binding residues include Asn142 and Asp143.

Belongs to the true venom lectin family. In terms of assembly, homodimer; non-covalently linked. In terms of tissue distribution, expressed by the venom gland.

It localises to the secreted. Its function is as follows. Recombinant C-type lectin BML-1 is able to agglutinate erythrocytes. May be a calcium-dependent lectin. The chain is C-type lectin BML-1 from Bungarus multicinctus (Many-banded krait).